Here is an 872-residue protein sequence, read N- to C-terminus: Lysosomal cholesterol signaling protein (872 aa).

The Lumenal segment spans residues 1–40; sequence MNSFSNLPAENLTIAVNMTKTLPTAVMHGFNSTNDPPSMS. The interval 3–372 is PIN-like transporter; that stretch reads SFSNLPAENL…SAWLLTFPTM (370 aa). 3 N-linked (GlcNAc...) asparagine glycosylation sites follow: N11, N17, and N31. The chain crosses the membrane as a helical span at residues 41-61; it reads ITRLFPALLECFGIVLCGYIA. Positions 45 and 59 each coordinate cholesterol. At 62–81 the chain is on the cytoplasmic side; it reads GRANVITSTQAKGLGNFVSR. Residues 82 to 102 traverse the membrane as a helical segment; sequence FALPALLFKNMVVLNFSNVDW. At 103-106 the chain is on the lumenal side; that stretch reads SFLY. A helical transmembrane segment spans residues 107–127; the sequence is SILIAKASVFFIVCVLTLLVA. At 128-135 the chain is on the cytoplasmic side; the sequence is SPDSRFSK. The chain crosses the membrane as a discontinuously helical span at residues 136-156; sequence AGLFPIFATQSNDFALGYPIV. Topologically, residues 157–169 are lumenal; sequence EALYQTTYPEYLQ. Residues 170-190 traverse the membrane as a helical segment; it reads YIYLVAPISLMMLNPIGFIFC. The Cytoplasmic segment spans residues 191 to 215; it reads EIQKWKDTQNASQNKIKIVGLGLLR. A discontinuously helical membrane pass occupies residues 216–236; sequence VLQNPIVFMVFIGIAFNFILD. Over 237 to 245 the chain is Lumenal; the sequence is RKVPVYVEN. A discontinuously helical transmembrane segment spans residues 246–266; it reads FLDGLGNSFSGSALFYLGLTM. The Cytoplasmic portion of the chain corresponds to 267–275; sequence VGKIKRLKK. Cholesterol is bound by residues G268, K269, and I270. The helical transmembrane segment at 276–296 threads the bilayer; sequence SAFVVLILLITAKLLVLPLLC. Residues 297-317 lie on the Lumenal side of the membrane; that stretch reads REMVELLDKGDSVVNHTSLSN. Residue N311 is glycosylated (N-linked (GlcNAc...) asparagine). Residues 318–338 form a discontinuously helical membrane-spanning segment; the sequence is YAFLYGVFPVAPGVAIFATQF. Residues 339–348 lie on the Cytoplasmic side of the membrane; it reads NMEVEIITSG. A helical membrane pass occupies residues 349 to 369; sequence MVISTFVSAPIMYVSAWLLTF. The Lumenal portion of the chain corresponds to 370 to 383; the sequence is PTMDPKPLAYAIQN. Residues 382-719 form a GPCR region; sequence QNVSFDISIV…FGIFGLDKHL (338 aa). A glycan (N-linked (GlcNAc...) asparagine) is linked at N383. A helical membrane pass occupies residues 384–404; sequence VSFDISIVSLISLIWSQAILL. At 405-416 the chain is on the cytoplasmic side; it reads LSKKYKQLPHML. The chain crosses the membrane as a helical span at residues 417–437; it reads TTNLLIAQSIVCAGMMIWNFV. Residues 438 to 440 lie on the Lumenal side of the membrane; sequence KEK. Residues 441-461 traverse the membrane as a helical segment; it reads NFVGQILVFVLLYSSLYSTYL. At 462–482 the chain is on the cytoplasmic side; the sequence is WTGLLAISLFLLKKRERVQIP. Residues 483 to 503 form a helical membrane-spanning segment; the sequence is VGIIIISGWGIPALLVGVLLI. The Lumenal portion of the chain corresponds to 504-522; it reads TGKHSGDSIDSAFFYGKEQ. The helical transmembrane segment at 523 to 543 threads the bilayer; the sequence is MITTAVTLFCSILIAGISLMC. Topologically, residues 544 to 662 are cytoplasmic; sequence MNRTAQAGSY…GDQQLTRHVL (119 aa). R659 contacts cholesterol. A helical membrane pass occupies residues 663–683; it reads LCLLLIIGLFANLSSCLWWLF. Residues 684–693 lie on the Lumenal side of the membrane; sequence NQEPGRLYVE. Residues 694 to 714 form a helical membrane-spanning segment; the sequence is LQFFCAVFNFGQGFISFGIFG. The Cytoplasmic portion of the chain corresponds to 715-872; sequence LDKHLIILPF…SSPPSHSPKT (158 aa). The region spanning 759–837 is the DEP domain; sequence YHRDLCIRNI…DEYLFYRFLQ (79 aa).

In terms of assembly, homodimer; via the transporter region and DEP domain. Interacts with the GATOR1 complex; preventing interaction between GATOR1 and KICSTOR; interaction is disrupted upon cholesterol starvation.

Its subcellular location is the lysosome membrane. Cholesterol-binding protein that acts as a regulator of mTORC1 signaling pathway. Acts as a sensor of cholesterol to signal cholesterol sufficiency to mTORC1: in presence of cholesterol, binds cholesterol, leading to disruption of the interaction between the GATOR1 and KICSTOR complexes and promotion of mTORC1 signaling. Upon cholesterol starvation, GPR155/LYCHOS is unable to perturb the association between GATOR1 and KICSTOR, leading to mTORC1 signaling inhibition. Binds indole-3-acetic acid and may play a role in tryptophan metabolism. This is Lysosomal cholesterol signaling protein (GPR155) from Pongo abelii (Sumatran orangutan).